A 174-amino-acid chain; its full sequence is Membrane protein NfeD2 (174 aa).

3 helical membrane passes run 16-36 (LIIA…FSGL), 47-67 (LVLS…LVLP), and 72-92 (LIAL…HIFV).

It belongs to the NfeD family.

It localises to the cell membrane. The protein resides in the membrane raft. Its function is as follows. Plays a role in assembly of FloT membrane rafts, probably recruited to rafts by FloT. The chain is Membrane protein NfeD2 from Bacillus subtilis (strain 168).